A 292-amino-acid polypeptide reads, in one-letter code: Bifunctional protein FolD (292 aa).

NADP(+) contacts are provided by residues 166-168, serine 191, and isoleucine 232; that span reads GRS.

Belongs to the tetrahydrofolate dehydrogenase/cyclohydrolase family. As to quaternary structure, homodimer.

It carries out the reaction (6R)-5,10-methylene-5,6,7,8-tetrahydrofolate + NADP(+) = (6R)-5,10-methenyltetrahydrofolate + NADPH. It catalyses the reaction (6R)-5,10-methenyltetrahydrofolate + H2O = (6R)-10-formyltetrahydrofolate + H(+). Its pathway is one-carbon metabolism; tetrahydrofolate interconversion. Its function is as follows. Catalyzes the oxidation of 5,10-methylenetetrahydrofolate to 5,10-methenyltetrahydrofolate and then the hydrolysis of 5,10-methenyltetrahydrofolate to 10-formyltetrahydrofolate. This is Bifunctional protein FolD from Synechococcus sp. (strain RCC307).